Here is an 867-residue protein sequence, read N- to C-terminus: Protein argonaute-3 (867 aa).

The tract at residues 1–83 is necessary and sufficient for interaction with krimp; sequence MSGRGNLLSL…IDTLKTDDHT (83 aa). An interaction with papi region spans residues 1 to 289; it reads MSGRGNLLSL…CDVSHRILCQ (289 aa). Arg-4, Arg-68, and Arg-70 each carry symmetric dimethylarginine. In terms of domain architecture, PAZ spans 291 to 402; sequence TVLEMLVDLY…LIPELCYLTG (112 aa). One can recognise a Piwi domain in the interval 566–853; the sequence is MVVCICHNRR…LAYLIGQSIQ (288 aa).

Belongs to the argonaute family. Piwi subfamily. Component of the ping-pong piRNA processing (4P) complex consisting of krimp, aub and AGO3. Interacts (via N-terminus when not methylated on arginine residues) with krimp (via non-canonical tudor domain); this interaction leads to symmetrical dimethylation on AGO3 arginine residues and its subsequent dissociation from krimp. Krimp associated AGO3 is mostly free of piRNA binding and the interaction plays an important role in the loading of AGO3 with piRNAs; piRNA binding may stimulate dissociation of the two proteins. May form part of a piRNA processing complex consisting of tud, aub and AGO3. Interacts (when symmetrically dimethylated on arginine residues) with tud. Forms a complex with smg, twin, aub, nos mRNA and piRNAs that target the nos 3'-untranslated region, in early embryos. Interacts (via the N-terminal region when symmetrically methylated on arginine residues) with papi (via C-terminus); this interaction is RNA-independent and may be required for AGO3 localization to the nuage. Interacts with TER94 and tral. Symmetrically dimethylated on Arg-4, Arg-68 and Arg-70, most likely by csul/PRMT5/DART5. Methylation state probably functions as an indicator of its piRNA binding state. In ovary, expressed in germline stem cells, germline cyst cells, nurse cells and oocytes during early stages. Also found in the somatic cap cells of the germarium. In testis, expressed in germline stem cells, primary gonial cells and early spermatocytes. No expression detected in the somatic hub cells at the apical tip of the testis (at protein level). Expressed in neurons throughout the adult brain and in the mushroom body subdivision in the peduncle. In the mushroom body, expressed only in gamma and core alpha-beta neurons.

The protein resides in the cytoplasm. It localises to the perinuclear region. It is found in the cytoplasmic ribonucleoprotein granule. Component of the perinuclear meiotic nuage, a germline-specific subcellular membraneless ribonucleoprotein compartment involved in production of transposable element-repressing Piwi-interacting RNA (piRNA)-induced silencing complexes (piRISCs), which are essential for maintaining germline integrity during oogenesis. Acts via the Piwi-interacting RNA (piRNA) metabolic process, which mediates the repression of transposable elements during meiosis by forming complexes composed of piRNAs and Piwi proteins and governs the methylation and subsequent repression of transposons. Piwi protein that directly binds piRNAs, a class of 24 to 30 nucleotide RNAs that are generated by a Dicer-independent mechanism and are primarily derived from transposons and other repeated sequence elements. Associates predominantly with sense piRNAs that contain adenine at nucleotide 10, but shows no preference for uridine at the 5' end. Shows RNA cleavage or slicer activity. Together with Piwi protein aub recruited to subregions of the perinuclear nuage by krimp, which coordinates their activity in the ping-pong amplification step of secondary piRNA biogenesis. Krimp recruits piRNA bound aub and unbound AGO3, bringing them into close proximity to facilitate the loading onto AGO3 of freshly cut piRNAs generated by aub cleavage of target sequences; krimp recognizes the piRNA loading state of the Piwi proteins via symmetrically dimethylated arginine modification in their N-terminus. Important for asymmetric ping-pong amplification to bias production towards antisense piRNAs capable of silencing transposable elements. In testis, associates with Su(Ste) and AT-chX-1 piRNAs mostly produced from antisense precursors. In the germline, acts to amplify pools of antisense piRNAs, among others Su(Ste), AT-chX-1 and roo, and to limit sense piRNA accumulation. Forms a complex with smg, twin, aub and specific piRNAs that targets nos mRNA (and probably other maternal mRNAS) for deadenylation promoting its decay during early embryogenesis. Involved in transposon silencing in the adult brain. The chain is Protein argonaute-3 from Drosophila melanogaster (Fruit fly).